A 95-amino-acid polypeptide reads, in one-letter code: Integration host factor subunit beta (95 aa).

It belongs to the bacterial histone-like protein family. Heterodimer of an alpha and a beta chain.

This protein is one of the two subunits of integration host factor, a specific DNA-binding protein that functions in genetic recombination as well as in transcriptional and translational control. The polypeptide is Integration host factor subunit beta (Psychromonas ingrahamii (strain DSM 17664 / CCUG 51855 / 37)).